The sequence spans 394 residues: Zinc finger and SCAN domain-containing protein 9 (394 aa).

A Glycyl lysine isopeptide (Lys-Gly) (interchain with G-Cter in SUMO2) cross-link involves residue Lys26. The SCAN box domain maps to 52–134 (RRHFRQLCYQ…ILLEDLEREL (83 aa)). Glycyl lysine isopeptide (Lys-Gly) (interchain with G-Cter in SUMO2) cross-links involve residues Lys215 and Lys238. C2H2-type zinc fingers lie at residues 254 to 276 (HKCDECGKSFTQSSGLIRHQRIH), 282 to 304 (YECNECGKAFSRSSGLFNHRGIH), 310 to 332 (YHCKECGKVFSQSAGLIQHQRIH), 338 to 360 (YQCSQCSKSYSRRSFLIEHQRSH), and 366 to 388 (HQCIECGKSFNRHCNLIRHQKIH).

Belongs to the krueppel C2H2-type zinc-finger protein family.

The protein localises to the nucleus. May be involved in transcriptional regulation. The protein is Zinc finger and SCAN domain-containing protein 9 (ZSCAN9) of Homo sapiens (Human).